The chain runs to 510 residues: Ribonuclease Y (510 aa).

The chain crosses the membrane as a helical span at residues 2-22; that stretch reads IYIIFSSIFAGFILGFLVRVF. Residues 198-258 form the KH domain; the sequence is TVASVELPND…IRKELAKRTL (61 aa). The region spanning 324–419 is the HD domain; sequence VLSHSKETAI…VQIADAISAS (96 aa).

This sequence belongs to the RNase Y family.

The protein resides in the cell membrane. Functionally, endoribonuclease that initiates mRNA decay. The chain is Ribonuclease Y from Borreliella burgdorferi (strain ATCC 35210 / DSM 4680 / CIP 102532 / B31) (Borrelia burgdorferi).